Consider the following 532-residue polypeptide: Tegument protein UL21 (532 aa).

A disordered region spans residues 251 to 276 (SPSVSSAPPPSAPDASLPPPGLQEAA). The segment covering 257–276 (APPPSAPDASLPPPGLQEAA) has biased composition (pro residues).

Belongs to the alphaherpesvirinae UL21 protein family. Interacts (via C-terminus) with UL16.

It is found in the virion tegument. The protein localises to the host cytoplasm. It localises to the host nucleus. Functionally, may participate in DNA packaging/capsid maturation events. Promotes efficient incorporation of tegument proteins UL46, UL49, and US3 into virions. May also play a role in capsid transport to the trans-Golgi network (TGN). This Human herpesvirus 2 (strain HG52) (HHV-2) protein is Tegument protein UL21.